The following is a 295-amino-acid chain: Lipoyl synthase (295 aa).

The [4Fe-4S] cluster site is built by Cys34, Cys39, Cys45, Cys60, Cys64, Cys67, and Ser273. A Radical SAM core domain is found at 46 to 262 (WNKRHATIMI…KLMAYAKGFS (217 aa)).

This sequence belongs to the radical SAM superfamily. Lipoyl synthase family. Requires [4Fe-4S] cluster as cofactor.

Its subcellular location is the cytoplasm. It carries out the reaction [[Fe-S] cluster scaffold protein carrying a second [4Fe-4S](2+) cluster] + N(6)-octanoyl-L-lysyl-[protein] + 2 oxidized [2Fe-2S]-[ferredoxin] + 2 S-adenosyl-L-methionine + 4 H(+) = [[Fe-S] cluster scaffold protein] + N(6)-[(R)-dihydrolipoyl]-L-lysyl-[protein] + 4 Fe(3+) + 2 hydrogen sulfide + 2 5'-deoxyadenosine + 2 L-methionine + 2 reduced [2Fe-2S]-[ferredoxin]. Its pathway is protein modification; protein lipoylation via endogenous pathway; protein N(6)-(lipoyl)lysine from octanoyl-[acyl-carrier-protein]: step 2/2. Catalyzes the radical-mediated insertion of two sulfur atoms into the C-6 and C-8 positions of the octanoyl moiety bound to the lipoyl domains of lipoate-dependent enzymes, thereby converting the octanoylated domains into lipoylated derivatives. This chain is Lipoyl synthase, found in Anaplasma marginale (strain St. Maries).